The following is a 559-amino-acid chain: MSSILFNRRWASVLLEALTRHGVHHVCIAPGSRSTPLTMAAASHPRLHSHTHFDERGLGHLALGLAKVSGQPVAVIVTSGTAVANLYPALIEAGLTGERLILLTADRPPELIDCGANQAIRQQNMFASHPTETLSLPRPTPDISAAWLVSSIDSAMARLDHGALHINCPFADPLYGEDDDGQQGWSAALGCWWQGETPWLQESSPYTGALRAEVDWAQWRRRRGVVLIGRVDAEAGRQAAAWGEELGWPVLGDVLSQSGQPLPCADLWLPHAEARRLLAQAEIVVQFGASLTGKRLLQWQAACKPQRYWLIDPLPGRLDPACHRGRRLVAPVQAWLQAHPAQPAAPWAPQLKVLAGRAAQCVEQTLQASFGEAQVAHRLAQLLPLRGQLFVGNSLIVRLVDALGQLPAGYPVYSNRGASGIDGLVSTIAGVQRGSGLPTLAILGDLSALYDINGLALLRQVTAPTVVIVVNNNGGQIFSMLPTPPAERERFYLMPQNVDFRHAAALFDLDYACPVDWAALTDAVSQGWRRCGTTLIELRVPGTAGAEALQQLLGKVAAL.

Belongs to the TPP enzyme family. MenD subfamily. Homodimer. The cofactor is Mg(2+). Mn(2+) is required as a cofactor. Requires thiamine diphosphate as cofactor.

It carries out the reaction isochorismate + 2-oxoglutarate + H(+) = 5-enolpyruvoyl-6-hydroxy-2-succinyl-cyclohex-3-ene-1-carboxylate + CO2. It functions in the pathway quinol/quinone metabolism; 1,4-dihydroxy-2-naphthoate biosynthesis; 1,4-dihydroxy-2-naphthoate from chorismate: step 2/7. It participates in quinol/quinone metabolism; menaquinone biosynthesis. In terms of biological role, catalyzes the thiamine diphosphate-dependent decarboxylation of 2-oxoglutarate and the subsequent addition of the resulting succinic semialdehyde-thiamine pyrophosphate anion to isochorismate to yield 2-succinyl-5-enolpyruvyl-6-hydroxy-3-cyclohexene-1-carboxylate (SEPHCHC). This Edwardsiella ictaluri (strain 93-146) protein is 2-succinyl-5-enolpyruvyl-6-hydroxy-3-cyclohexene-1-carboxylate synthase.